We begin with the raw amino-acid sequence, 151 residues long: Deoxyuridine 5'-triphosphate nucleotidohydrolase (151 aa).

Residues 70–72 (RSG), N83, and 87–89 (LID) each bind substrate.

The protein belongs to the dUTPase family. Mg(2+) serves as cofactor.

The enzyme catalyses dUTP + H2O = dUMP + diphosphate + H(+). The protein operates within pyrimidine metabolism; dUMP biosynthesis; dUMP from dCTP (dUTP route): step 2/2. Its function is as follows. This enzyme is involved in nucleotide metabolism: it produces dUMP, the immediate precursor of thymidine nucleotides and it decreases the intracellular concentration of dUTP so that uracil cannot be incorporated into DNA. This is Deoxyuridine 5'-triphosphate nucleotidohydrolase from Methylococcus capsulatus (strain ATCC 33009 / NCIMB 11132 / Bath).